We begin with the raw amino-acid sequence, 328 residues long: Probable cell division protein WhiA (328 aa).

Residues Ser-275–Glu-308 constitute a DNA-binding region (H-T-H motif).

Belongs to the WhiA family.

Involved in cell division and chromosome segregation. In Nocardioides sp. (strain ATCC BAA-499 / JS614), this protein is Probable cell division protein WhiA.